Consider the following 466-residue polypeptide: Ribulose bisphosphate carboxylase large chain (466 aa).

N6,N6,N6-trimethyllysine is present on K5. Substrate is bound by residues N114 and T164. K166 serves as the catalytic Proton acceptor. Position 168 (K168) interacts with substrate. 3 residues coordinate Mg(2+): K192, D194, and E195. An N6-carboxylysine modification is found at K192. H285 acts as the Proton acceptor in catalysis. R286, H318, and S370 together coordinate substrate.

Belongs to the RuBisCO large chain family. Type I subfamily. As to quaternary structure, heterohexadecamer of 8 large chains and 8 small chains; disulfide-linked. The disulfide link is formed within the large subunit homodimers. It depends on Mg(2+) as a cofactor. The disulfide bond which can form in the large chain dimeric partners within the hexadecamer appears to be associated with oxidative stress and protein turnover.

It localises to the plastid. The protein resides in the chloroplast. It catalyses the reaction 2 (2R)-3-phosphoglycerate + 2 H(+) = D-ribulose 1,5-bisphosphate + CO2 + H2O. It carries out the reaction D-ribulose 1,5-bisphosphate + O2 = 2-phosphoglycolate + (2R)-3-phosphoglycerate + 2 H(+). Functionally, ruBisCO catalyzes two reactions: the carboxylation of D-ribulose 1,5-bisphosphate, the primary event in carbon dioxide fixation, as well as the oxidative fragmentation of the pentose substrate in the photorespiration process. Both reactions occur simultaneously and in competition at the same active site. This Drosera capensis (Cape sundew) protein is Ribulose bisphosphate carboxylase large chain.